The primary structure comprises 380 residues: Probable inorganic pyrophosphatase (380 aa).

3 residues coordinate Mg(2+): D198, D203, and D235.

It belongs to the PPase family. The cofactor is Mg(2+).

It catalyses the reaction diphosphate + H2O = 2 phosphate + H(+). This chain is Probable inorganic pyrophosphatase, found in Plasmodium falciparum (isolate 3D7).